We begin with the raw amino-acid sequence, 550 residues long: Dihydroxy-acid dehydratase (550 aa).

Position 78 (Asp78) interacts with Mg(2+). Residue Cys119 coordinates [2Fe-2S] cluster. Residues Asp120 and Lys121 each coordinate Mg(2+). Lys121 carries the post-translational modification N6-carboxylysine. Cys191 serves as a coordination point for [2Fe-2S] cluster. Glu440 lines the Mg(2+) pocket. The active-site Proton acceptor is the Ser466.

It belongs to the IlvD/Edd family. In terms of assembly, homodimer. It depends on [2Fe-2S] cluster as a cofactor. Mg(2+) is required as a cofactor.

The catalysed reaction is (2R)-2,3-dihydroxy-3-methylbutanoate = 3-methyl-2-oxobutanoate + H2O. It carries out the reaction (2R,3R)-2,3-dihydroxy-3-methylpentanoate = (S)-3-methyl-2-oxopentanoate + H2O. It participates in amino-acid biosynthesis; L-isoleucine biosynthesis; L-isoleucine from 2-oxobutanoate: step 3/4. Its pathway is amino-acid biosynthesis; L-valine biosynthesis; L-valine from pyruvate: step 3/4. In terms of biological role, functions in the biosynthesis of branched-chain amino acids. Catalyzes the dehydration of (2R,3R)-2,3-dihydroxy-3-methylpentanoate (2,3-dihydroxy-3-methylvalerate) into 2-oxo-3-methylpentanoate (2-oxo-3-methylvalerate) and of (2R)-2,3-dihydroxy-3-methylbutanoate (2,3-dihydroxyisovalerate) into 2-oxo-3-methylbutanoate (2-oxoisovalerate), the penultimate precursor to L-isoleucine and L-valine, respectively. This Methanococcus vannielii (strain ATCC 35089 / DSM 1224 / JCM 13029 / OCM 148 / SB) protein is Dihydroxy-acid dehydratase.